A 115-amino-acid polypeptide reads, in one-letter code: Probable mycobacterial cidal antitoxin Rv3188 (115 aa).

The protein belongs to the MbcA/ParS/Xre antitoxin family. As to quaternary structure, forms a heterotetramer with cognate toxin Rv3189.

Its function is as follows. Probable antitoxin component of a type II toxin-antitoxin (TA) system. Neutralizes the activity of cognate toxin Rv3189 by blocking access to the toxin active site. The sequence is that of Probable mycobacterial cidal antitoxin Rv3188 from Mycobacterium tuberculosis (strain ATCC 25618 / H37Rv).